Reading from the N-terminus, the 389-residue chain is Sterol methyltransferase-like 2 (389 aa).

A helical membrane pass occupies residues 25-45 (LSWKGAVGLVAATGIGYVLII).

The protein belongs to the class I-like SAM-binding methyltransferase superfamily. Erg6/SMT family.

Its subcellular location is the microsome membrane. In terms of biological role, unable to convert squalene, botryococcene, cycloartenol, zymosterol or lanosterol to mono-, di-, tri- or tetramethylated derivatives. The chain is Sterol methyltransferase-like 2 (SMT-2) from Botryococcus braunii (Green alga).